Here is a 92-residue protein sequence, read N- to C-terminus: Serine rich endogenous peptide 11 (92 aa).

An N-terminal signal peptide occupies residues 1–29 (MENNTFSSKSINLLILLLLLCTFLCQTES). Positions 50–92 (PNTDIGTPSSTSDRGGGGNGRRLMSQMDVGASSSGQGGGRNRH) are disordered. Residues 53-62 (DIGTPSSTSD) show a composition bias toward polar residues. 2 short sequence motifs (SCOOP motif) span residues 53 to 67 (DIGT…GGGG) and 75 to 89 (QMDV…GGGR). 2 short sequence motifs (sxS motif essential for MIK2 binding) span residues 59–61 (STS) and 81–83 (SSS).

Belongs to the serine rich endogenous peptide (SCOOP) phytocytokine family. Interacts with MIK2 (via extracellular leucine-rich repeat domain); this interaction triggers the formation of complex between MIK2 and the BAK1/SERK3 and SERK4 coreceptors, and subsequent BAK1 activation by phosphorylation. Mostly expressed in seedlings shoots and roots, and, to a lower extent, in leaves.

The protein resides in the cell membrane. It is found in the secreted. Its subcellular location is the extracellular space. The protein localises to the apoplast. Its function is as follows. Brassicaceae-specific phytocytokine (plant endogenous peptide released into the apoplast) perceived by MIK2 in a BAK1/SERK3 and SERK4 coreceptors-dependent manner, that modulates various physiological and antimicrobial processes including growth prevention and reactive oxygen species (ROS) response regulation. The sequence is that of Serine rich endogenous peptide 11 from Arabidopsis thaliana (Mouse-ear cress).